The sequence spans 123 residues: Integration host factor subunit alpha (123 aa).

This sequence belongs to the bacterial histone-like protein family. Heterodimer of an alpha and a beta chain.

This protein is one of the two subunits of integration host factor, a specific DNA-binding protein that functions in genetic recombination as well as in transcriptional and translational control. The protein is Integration host factor subunit alpha of Polaromonas naphthalenivorans (strain CJ2).